Reading from the N-terminus, the 77-residue chain is MDLVKNHLMYAVREEVEILKEQIRELVEKNSQLERENTLLKTLASPEQLEKFQSRLSPEEPAPETPEAPEAPGGSAV.

At methionine 1 the chain carries N-acetylmethionine. The tract at residues leucine 19–leucine 40 is leucine-zipper. The segment at lysine 41–valine 77 is disordered. Serine 45 bears the Phosphoserine mark. Residues alanine 68–valine 77 show a composition bias toward low complexity.

Belongs to the TSC-22/Dip/Bun family. In terms of assembly, can form homodimers, however it is likely to function as a monomer. Interacts with AP1 and NFKB1. Interacts with MYOD1. Interacts with HDAC1; this interaction affects HDAC1 activity on MYOG promoter and thus inhibits MYOD1 transcriptional activity.

The protein resides in the cytoplasm. It is found in the nucleus. Protects T-cells from IL2 deprivation-induced apoptosis through the inhibition of FOXO3A transcriptional activity that leads to the down-regulation of the pro-apoptotic factor BCL2L11. In macrophages, plays a role in the anti-inflammatory and immunosuppressive effects of glucocorticoids and IL10. In T-cells, inhibits anti-CD3-induced NFKB1 nuclear translocation. In vitro, suppresses AP1 and NFKB1 DNA-binding activities. Inhibits myogenic differentiation and mediates anti-myogenic effects of glucocorticoids by binding and regulating MYOD1 and HDAC1 transcriptional activity resulting in reduced expression of MYOG. The protein is TSC22 domain family protein 3 (TSC22D3) of Sus scrofa (Pig).